The following is a 1013-amino-acid chain: Poly [ADP-ribose] polymerase 1 (1013 aa).

2 PARP-type zinc fingers span residues 10–92 (YKAE…ESGG) and 113–203 (FAVE…PAVK). The Zn(2+) site is built by Cys-22, Cys-25, His-54, Cys-57, Cys-125, Cys-128, His-159, and Cys-162. The segment at 202–228 (VKSEGKRKADEVDGGVSKKQKKEDEKL) is disordered. A Nuclear localization signal motif is present at residues 207–209 (KRK). The 135-residue stretch at 219 to 353 (KKQKKEDEKL…FKRQDRVFPK (135 aa)) folds into the PADR1 zinc-binding domain. The interval 284–326 (GSLKPCETCKGQLVFKSDAYYCTGDISAWTKCVFKTQTPDRKD) is zinc ribbon. Residues Cys-289, Cys-292, Cys-305, and Cys-315 each coordinate Zn(2+). Positions 353-385 (KDAPPAAATPSSGSTTSAATSVSSASKNLTEAP) are disordered. Positions 356–378 (PPAAATPSSGSTTSAATSVSSAS) are enriched in low complexity. Residues 365 to 523 (GSTTSAATSV…EGGSKSKKMK (159 aa)) are automodification domain. A BRCT domain is found at 385–461 (PADKPLTGMK…RVVADDFLTD (77 aa)). Glu-413, Glu-435, Glu-444, Glu-445, Glu-464, Glu-471, Glu-484, and Glu-488 each carry polyADP-ribosyl glutamic acid. Low complexity predominate over residues 494 to 507 (AATKSTGAHSSKST). The interval 494–522 (AATKSTGAHSSKSTGKVKEEEGGSKSKKM) is disordered. 2 positions are modified to polyADP-ribosyl glutamic acid: Glu-512 and Glu-513. Positions 541-637 (CAHVLEQNGK…SNFTKYPNKF (97 aa)) constitute a WGR domain. A PARP alpha-helical domain is found at 661 to 778 (KSQLEKPVQD…DIEVAYSLLR (118 aa)). One can recognise a PARP catalytic domain in the interval 787 to 1013 (DPIDINYEKL…IRFNYQTSLW (227 aa)). Residues 861-863 (HGS), Gly-870, Arg-877, and Ser-903 each bind NAD(+). Glu-987 acts as the For poly [ADP-ribose] polymerase activity in catalysis.

The protein belongs to the ARTD/PARP family. Homodimer; PARP-type zinc-fingers from separate parp1 molecules form a dimer module that specifically recognizes DNA strand breaks. Post-translationally, poly-ADP-ribosylated on serine, glutamate and aspartate residues by autocatalysis. Auto-ADP-ribosylation on serine takes place following interaction with HPF1. Auto poly-ADP-ribosylation on serine residues promotes its dissociation from chromatin.

It localises to the chromosome. Its subcellular location is the nucleus. The protein resides in the nucleolus. The protein localises to the cytoplasm. It is found in the cytosol. It catalyses the reaction NAD(+) + (ADP-D-ribosyl)n-acceptor = nicotinamide + (ADP-D-ribosyl)n+1-acceptor + H(+).. The enzyme catalyses L-seryl-[protein] + NAD(+) = O-(ADP-D-ribosyl)-L-seryl-[protein] + nicotinamide + H(+). The catalysed reaction is L-aspartyl-[protein] + NAD(+) = 4-O-(ADP-D-ribosyl)-L-aspartyl-[protein] + nicotinamide. It carries out the reaction L-glutamyl-[protein] + NAD(+) = 5-O-(ADP-D-ribosyl)-L-glutamyl-[protein] + nicotinamide. It catalyses the reaction L-tyrosyl-[protein] + NAD(+) = O-(ADP-D-ribosyl)-L-tyrosyl-[protein] + nicotinamide + H(+). The enzyme catalyses L-histidyl-[protein] + NAD(+) = N(tele)-(ADP-D-ribosyl)-L-histidyl-[protein] + nicotinamide + H(+). With respect to regulation, ADP-ribosyltransferase activity is regulated via an allosteric activation mechanism. In absence of activation signal, parp1 is autoinhibited by the PARP alpha-helical domain (also named HD region), which prevents effective NAD(+)-binding. Activity is highly stimulated by signals, such as DNA strand breaks. Binding to damaged DNA unfolds the PARP alpha-helical domain, relieving autoinhibition. Poly-ADP-ribosyltransferase activity is tightly regulated and parp1 is removed from damaged chromatin following initial poly-ADP-ribosylation of chromatin to avoid prolonged residence (trapping) that has cytotoxic consequences. A number of factors or post-translational modifications (auto-poly-ADP-ribosylation) promote parp1 removal from chromatin. Its function is as follows. Poly-ADP-ribosyltransferase that mediates poly-ADP-ribosylation of proteins and plays a key role in DNA repair. Mediates glutamate, aspartate, serine, histidine or tyrosine ADP-ribosylation of proteins: the ADP-D-ribosyl group of NAD(+) is transferred to the acceptor carboxyl group of target residues and further ADP-ribosyl groups are transferred to the 2'-position of the terminal adenosine moiety, building up a polymer with an average chain length of 20-30 units. Serine ADP-ribosylation of proteins constitutes the primary form of ADP-ribosylation of proteins in response to DNA damage. Specificity for the different amino acids is conferred by interacting factors, such as hpf1 and nmnat1. Following interaction with hpf1, catalyzes serine ADP-ribosylation of target proteins; hpf1 confers serine specificity by completing the parp1 active site. Also catalyzes tyrosine ADP-ribosylation of target proteins following interaction with hpf1. Following interaction with nmnat1, catalyzes glutamate and aspartate ADP-ribosylation of target proteins; nmnat1 confers glutamate and aspartate specificity. Parp1 initiates the repair of DNA breaks: recognizes and binds DNA breaks within chromatin and recruits hpf1, licensing serine ADP-ribosylation of target proteins, such as histones (H2BS6ADPr and H3S10ADPr), thereby promoting decompaction of chromatin and the recruitment of repair factors leading to the reparation of DNA strand breaks. In addition to base excision repair (BER) pathway, also involved in double-strand breaks (DSBs) repair. Mediates the poly-ADP-ribosylation of a number of proteins. In addition to proteins, also able to ADP-ribosylate DNA: catalyzes ADP-ribosylation of DNA strand break termini containing terminal phosphates and a 2'-OH group in single- and double-stranded DNA, respectively. Parp1-mediated DNA repair in neurons plays a role in sleep: senses DNA damage in neurons and promotes sleep, facilitating efficient DNA repair. In addition to DNA repair, also involved in other processes, such as transcription regulation, programmed cell death, membrane repair, adipogenesis and innate immunity. Acts as a repressor of transcription: binds to nucleosomes and modulates chromatin structure in a manner similar to histone H1, thereby altering RNA polymerase II. Acts both as a positive and negative regulator of transcription elongation, depending on the context. Poly-ADP-ribose chains generated by parp1 also play a role in poly-ADP-ribose-dependent cell death, a process named parthanatos. Also acts as a negative regulator of the cGAS-STING pathway by mediating poly-ADP-ribosylation and inactivation of cgas. Acts as a negative regulator of adipogenesis by catalyzing poly ADP-ribosylation of histone H2B on 'Glu-35' (H2BE35ADPr). This chain is Poly [ADP-ribose] polymerase 1, found in Danio rerio (Zebrafish).